A 122-amino-acid chain; its full sequence is Large ribosomal subunit protein bL12 (122 aa).

This sequence belongs to the bacterial ribosomal protein bL12 family. In terms of assembly, homodimer. Part of the ribosomal stalk of the 50S ribosomal subunit. Forms a multimeric L10(L12)X complex, where L10 forms an elongated spine to which 2 to 4 L12 dimers bind in a sequential fashion. Binds GTP-bound translation factors.

Its function is as follows. Forms part of the ribosomal stalk which helps the ribosome interact with GTP-bound translation factors. Is thus essential for accurate translation. This Bdellovibrio bacteriovorus (strain ATCC 15356 / DSM 50701 / NCIMB 9529 / HD100) protein is Large ribosomal subunit protein bL12.